A 322-amino-acid chain; its full sequence is Large ribosomal subunit protein uL29m (322 aa).

The segment at 1–44 (MLNVQRGLHTTVRLSARTKYTKPKPKPQARVIKSEPSQVTHHDN) is disordered.

It belongs to the universal ribosomal protein uL29 family. In terms of assembly, component of the mitochondrial large ribosomal subunit. Mature mitochondrial ribosomes consist of a small (37S) and a large (54S) subunit. The 37S subunit contains at least 33 different proteins and 1 molecule of RNA (15S). The 54S subunit contains at least 45 different proteins and 1 molecule of RNA (21S).

The protein resides in the mitochondrion. The sequence is that of Large ribosomal subunit protein uL29m (MRPL4) from Vanderwaltozyma polyspora (strain ATCC 22028 / DSM 70294 / BCRC 21397 / CBS 2163 / NBRC 10782 / NRRL Y-8283 / UCD 57-17) (Kluyveromyces polysporus).